Consider the following 573-residue polypeptide: ATP-dependent RNA helicase RhlB (573 aa).

A Q motif motif is present at residues 9–37; the sequence is VTFSSFDLHPALIAGLESAGFTRCTPIQA. In terms of domain architecture, Helicase ATP-binding spans 40-220; it reads LPVALPGGDV…YEHMNEPEKL (181 aa). 53 to 60 contacts ATP; it reads AQTGTGKT. A DEAD box motif is present at residues 166 to 169; that stretch reads DEAD. The Helicase C-terminal domain maps to 231–393; that stretch reads RVRQRIYFPS…PVTSELLTPL (163 aa). The tract at residues 391 to 560 is disordered; that stretch reads TPLPRAPRVP…KPSGSPSLLS (170 aa). The span at 402 to 411 shows a compositional bias: acidic residues; the sequence is EGEEADDDAG. A compositionally biased stretch (basic and acidic residues) spans 419 to 432; that stretch reads REAREQRAAEEQRR. Over residues 435–450 the composition is skewed to gly residues; sequence GRSGSGGSRSGSGGGG. Over residues 451–462 the composition is skewed to basic and acidic residues; that stretch reads GRREGAGADGKP. Over residues 484–499 the composition is skewed to low complexity; that stretch reads PVVAAAAGQAPSAGVA. Over residues 505–514 the composition is skewed to basic residues; the sequence is PRKRRRRRNG. Over residues 541–560 the composition is skewed to low complexity; the sequence is VVAKPVRAAAKPSGSPSLLS.

This sequence belongs to the DEAD box helicase family. RhlB subfamily. In terms of assembly, component of the RNA degradosome, which is a multiprotein complex involved in RNA processing and mRNA degradation.

The protein localises to the cytoplasm. The enzyme catalyses ATP + H2O = ADP + phosphate + H(+). Functionally, DEAD-box RNA helicase involved in RNA degradation. Has RNA-dependent ATPase activity and unwinds double-stranded RNA. The protein is ATP-dependent RNA helicase RhlB of Xanthomonas euvesicatoria pv. vesicatoria (strain 85-10) (Xanthomonas campestris pv. vesicatoria).